A 464-amino-acid polypeptide reads, in one-letter code: MGLTDIFLNLLLFVYPAVFIIYQIILYEISARKQINQEALKYSNLPVLSIIVPIKNEEISVIQGLLDNLSNLIWDKKKLEIIIVSDDNEDYFTKIINTVKVPKDLTVYFYRREKKLGYKSGALQYGFEKATGDLILTIDVDSRLPPNALINAYEKMQSNTCDAIVFQWNGYSSNQYSTLAKGMVVSTLFASKALFEGKEKLKLKIYPVGSGTMFSREALRVVNGWDYRLVQDDLEIGTRLIYNGKNVCASGIPIYVEVPDNFYSFYVQQTRWAMGSAEVLRNRLKYIIKSKISFTQRMDLIIYLLQYTPVIVTFFISTLLSLMLPFRIGHDPLNSPALLFWLVSLGLYASLLLSLALKLGLNLKDSLMGIGRLTAFTVSISPFIVFNFFKGLLKSGNTYVITPKGTVKKTNKLLRIIAIIGVFGLLYLLSSILYIYEGYYVTGIWLLYYSSAYLYTMLLYYKEL.

The next 6 helical transmembrane spans lie at 6 to 26, 300 to 320, 337 to 357, 373 to 393, 416 to 436, and 439 to 459; these read IFLNLLLFVYPAVFIIYQIIL, LIIYLLQYTPVIVTFFISTLL, ALLFWLVSLGLYASLLLSLAL, LTAFTVSISPFIVFNFFKGLL, IIAIIGVFGLLYLLSSILYIY, and YYVTGIWLLYYSSAYLYTMLL.

The protein belongs to the glycosyltransferase 2 family.

It localises to the cell membrane. Its function is as follows. Probably part of a 4-gene DNA damage response locus in which the upstream ups system, in combination with this downstream locus, functions in homologous recombination to rescue Sulfolobales from DNA-damaging threats. This chain is Probable glycosyltransferase Saci_1499, found in Sulfolobus acidocaldarius (strain ATCC 33909 / DSM 639 / JCM 8929 / NBRC 15157 / NCIMB 11770).